The following is a 306-amino-acid chain: tRNA dimethylallyltransferase (306 aa).

11 to 18 (APTAAGKT) is a binding site for ATP. A substrate-binding site is contributed by 13–18 (TAAGKT).

The protein belongs to the IPP transferase family. In terms of assembly, monomer. The cofactor is Mg(2+).

It carries out the reaction adenosine(37) in tRNA + dimethylallyl diphosphate = N(6)-dimethylallyladenosine(37) in tRNA + diphosphate. Catalyzes the transfer of a dimethylallyl group onto the adenine at position 37 in tRNAs that read codons beginning with uridine, leading to the formation of N6-(dimethylallyl)adenosine (i(6)A). In Deinococcus radiodurans (strain ATCC 13939 / DSM 20539 / JCM 16871 / CCUG 27074 / LMG 4051 / NBRC 15346 / NCIMB 9279 / VKM B-1422 / R1), this protein is tRNA dimethylallyltransferase.